Reading from the N-terminus, the 333-residue chain is Holliday junction branch migration complex subunit RuvB (333 aa).

The interval methionine 1 to tyrosine 182 is large ATPase domain (RuvB-L). ATP contacts are provided by residues leucine 21, arginine 22, glycine 63, lysine 66, threonine 67, threonine 68, glutamate 129–phenylalanine 131, arginine 172, tyrosine 182, and arginine 219. Threonine 67 lines the Mg(2+) pocket. A small ATPAse domain (RuvB-S) region spans residues threonine 183–glutamine 253. The interval lysine 256 to valine 333 is head domain (RuvB-H). DNA contacts are provided by arginine 311 and arginine 316.

Belongs to the RuvB family. In terms of assembly, homohexamer. Forms an RuvA(8)-RuvB(12)-Holliday junction (HJ) complex. HJ DNA is sandwiched between 2 RuvA tetramers; dsDNA enters through RuvA and exits via RuvB. An RuvB hexamer assembles on each DNA strand where it exits the tetramer. Each RuvB hexamer is contacted by two RuvA subunits (via domain III) on 2 adjacent RuvB subunits; this complex drives branch migration. In the full resolvosome a probable DNA-RuvA(4)-RuvB(12)-RuvC(2) complex forms which resolves the HJ.

Its subcellular location is the cytoplasm. The catalysed reaction is ATP + H2O = ADP + phosphate + H(+). In terms of biological role, the RuvA-RuvB-RuvC complex processes Holliday junction (HJ) DNA during genetic recombination and DNA repair, while the RuvA-RuvB complex plays an important role in the rescue of blocked DNA replication forks via replication fork reversal (RFR). RuvA specifically binds to HJ cruciform DNA, conferring on it an open structure. The RuvB hexamer acts as an ATP-dependent pump, pulling dsDNA into and through the RuvAB complex. RuvB forms 2 homohexamers on either side of HJ DNA bound by 1 or 2 RuvA tetramers; 4 subunits per hexamer contact DNA at a time. Coordinated motions by a converter formed by DNA-disengaged RuvB subunits stimulates ATP hydrolysis and nucleotide exchange. Immobilization of the converter enables RuvB to convert the ATP-contained energy into a lever motion, pulling 2 nucleotides of DNA out of the RuvA tetramer per ATP hydrolyzed, thus driving DNA branch migration. The RuvB motors rotate together with the DNA substrate, which together with the progressing nucleotide cycle form the mechanistic basis for DNA recombination by continuous HJ branch migration. Branch migration allows RuvC to scan DNA until it finds its consensus sequence, where it cleaves and resolves cruciform DNA. The sequence is that of Holliday junction branch migration complex subunit RuvB from Bacillus cereus (strain Q1).